The following is a 730-amino-acid chain: Polyribonucleotide nucleotidyltransferase (730 aa).

Residues Asp-489 and Asp-495 each contribute to the Mg(2+) site. The 60-residue stretch at 556 to 615 (PKIDTIKVDVDKIKIVIGKGGETIDKIIEETGVKIDIDEDGNIAIYSSDQEAINRTKEII) folds into the KH domain. The region spanning 625–693 (GEIYEAEVVR…DKGRIDASMK (69 aa)) is the S1 motif domain. Positions 691-730 (SMKALLPRPPRSEKSNKEDHQSVRHHGSPKDDKGKEKYDK) are disordered. Residues 700–730 (PRSEKSNKEDHQSVRHHGSPKDDKGKEKYDK) are compositionally biased toward basic and acidic residues.

It belongs to the polyribonucleotide nucleotidyltransferase family. Requires Mg(2+) as cofactor.

It is found in the cytoplasm. It catalyses the reaction RNA(n+1) + phosphate = RNA(n) + a ribonucleoside 5'-diphosphate. Functionally, involved in mRNA degradation. Catalyzes the phosphorolysis of single-stranded polyribonucleotides processively in the 3'- to 5'-direction. This chain is Polyribonucleotide nucleotidyltransferase, found in Streptococcus mutans serotype c (strain ATCC 700610 / UA159).